Consider the following 447-residue polypeptide: Chordin-like protein 1 (447 aa).

A signal peptide spans 1 to 22 (MDGMKYIISLFFIFVFLEGSKT). VWFC domains lie at 30–95 (TYCV…PRCP) and 108–174 (KSCE…RVCR). Asn113 carries an N-linked (GlcNAc...) asparagine glycan. The short motif at 174 to 176 (RGD) is the Cell attachment site element. The interval 200-224 (SYLRSPYDPPPNRQAGGLPRFPGSR) is disordered. In terms of domain architecture, VWFC 3 spans 253–318 (QVCVSNGKTY…IDGKCCKVCP (66 aa)). An N-linked (GlcNAc...) asparagine glycan is attached at Asn286.

Post-translationally, may be glycosylated. As to expression, expressed in heart, brain, lung, liver, kidney and testis.

The protein resides in the secreted. Its function is as follows. Seems to antagonize the function of BMP4 by binding to it and preventing its interaction with receptors. Alters the fate commitment of neural stem cells from gliogenesis to neurogenesis. Contributes to neuronal differentiation of neural stem cells in the brain by preventing the adoption of a glial fate. May play a crucial role in dorsoventral axis formation. Antagonizes the function of BMP7 and may thus play an important role in the embryonic bone formation. Shows no inhibitory effect on the inducing activity of BMP2. Plays a role during anterior segment eye development. The sequence is that of Chordin-like protein 1 (Chrdl1) from Mus musculus (Mouse).